Reading from the N-terminus, the 79-residue chain is Small ribosomal subunit protein uS17 (79 aa).

It belongs to the universal ribosomal protein uS17 family. In terms of assembly, part of the 30S ribosomal subunit.

One of the primary rRNA binding proteins, it binds specifically to the 5'-end of 16S ribosomal RNA. The polypeptide is Small ribosomal subunit protein uS17 (Orientia tsutsugamushi (strain Boryong) (Rickettsia tsutsugamushi)).